Consider the following 289-residue polypeptide: Ribosomal RNA small subunit methyltransferase I (289 aa).

The protein belongs to the methyltransferase superfamily. RsmI family.

Its subcellular location is the cytoplasm. The enzyme catalyses cytidine(1402) in 16S rRNA + S-adenosyl-L-methionine = 2'-O-methylcytidine(1402) in 16S rRNA + S-adenosyl-L-homocysteine + H(+). Catalyzes the 2'-O-methylation of the ribose of cytidine 1402 (C1402) in 16S rRNA. The polypeptide is Ribosomal RNA small subunit methyltransferase I (Halalkalibacterium halodurans (strain ATCC BAA-125 / DSM 18197 / FERM 7344 / JCM 9153 / C-125) (Bacillus halodurans)).